The primary structure comprises 249 residues: Deoxyribose-phosphate aldolase (249 aa).

The active-site Proton donor/acceptor is D105. Catalysis depends on K168, which acts as the Schiff-base intermediate with acetaldehyde. The active-site Proton donor/acceptor is K216.

Belongs to the DeoC/FbaB aldolase family. DeoC type 1 subfamily.

It is found in the cytoplasm. It carries out the reaction 2-deoxy-D-ribose 5-phosphate = D-glyceraldehyde 3-phosphate + acetaldehyde. It participates in carbohydrate degradation; 2-deoxy-D-ribose 1-phosphate degradation; D-glyceraldehyde 3-phosphate and acetaldehyde from 2-deoxy-alpha-D-ribose 1-phosphate: step 2/2. Catalyzes a reversible aldol reaction between acetaldehyde and D-glyceraldehyde 3-phosphate to generate 2-deoxy-D-ribose 5-phosphate. This Corynebacterium jeikeium (strain K411) protein is Deoxyribose-phosphate aldolase.